Here is a 401-residue protein sequence, read N- to C-terminus: 4-diphosphocytidyl-2-C-methyl-D-erythritol kinase, chloroplastic (401 aa).

The transit peptide at 1–52 directs the protein to the chloroplast; it reads MACSTHLLSQSLYPLNRANPAAARGHLRFQASPSVRLGSGTSRRRALGLRVA. Residue 180-190 participates in ATP binding; sequence PTGAGLGGGSS.

Belongs to the GHMP kinase family. IspE subfamily.

It localises to the plastid. It is found in the chloroplast stroma. The enzyme catalyses 4-CDP-2-C-methyl-D-erythritol + ATP = 4-CDP-2-C-methyl-D-erythritol 2-phosphate + ADP + H(+). Its pathway is isoprenoid biosynthesis; isopentenyl diphosphate biosynthesis via DXP pathway; isopentenyl diphosphate from 1-deoxy-D-xylulose 5-phosphate: step 3/6. Functionally, enzyme of the plastid non-mevalonate pathway for isoprenoid biosynthesis that catalyzes the phosphorylation of the position 2 hydroxy group of 4-diphosphocytidyl-2C-methyl-D-erythritol. Is essential for chloroplast development. The polypeptide is 4-diphosphocytidyl-2-C-methyl-D-erythritol kinase, chloroplastic (ISPE) (Oryza sativa subsp. japonica (Rice)).